The following is a 428-amino-acid chain: Enolase (428 aa).

Residue Gln162 coordinates (2R)-2-phosphoglycerate. Catalysis depends on Glu204, which acts as the Proton donor. Positions 241, 283, and 310 each coordinate Mg(2+). (2R)-2-phosphoglycerate contacts are provided by Lys335, Arg364, Ser365, and Lys386. The Proton acceptor role is filled by Lys335.

Belongs to the enolase family. Requires Mg(2+) as cofactor.

It localises to the cytoplasm. The protein localises to the secreted. It is found in the cell surface. The catalysed reaction is (2R)-2-phosphoglycerate = phosphoenolpyruvate + H2O. The protein operates within carbohydrate degradation; glycolysis; pyruvate from D-glyceraldehyde 3-phosphate: step 4/5. In terms of biological role, catalyzes the reversible conversion of 2-phosphoglycerate (2-PG) into phosphoenolpyruvate (PEP). It is essential for the degradation of carbohydrates via glycolysis. This Rhodococcus opacus (strain B4) protein is Enolase.